The primary structure comprises 731 residues: Alpha-xylosidase (731 aa).

Residues Asp353 and Glu356 contribute to the active site. The Proton donor role is filled by Asp428.

This sequence belongs to the glycosyl hydrolase 31 family. Monomer.

It carries out the reaction Hydrolysis of terminal, non-reducing alpha-D-xylose residues with release of alpha-D-xylose.. Functionally, catalyzes the liberation of alpha-xylose from the non-reducing terminal glucose of xyloglucan oligosaccharides. Has high hydrolytic activity on the disaccharide isoprimeverose. Follows a retaining mechanism of substrate hydrolysis. The polypeptide is Alpha-xylosidase (xylS) (Saccharolobus solfataricus (strain ATCC 35092 / DSM 1617 / JCM 11322 / P2) (Sulfolobus solfataricus)).